Consider the following 692-residue polypeptide: Penicillin-binding protein activator LpoA (692 aa).

The first 26 residues, 1–26 (MLSSITVRTKSGRLIPLVLAATLLAA), serve as a signal peptide directing secretion. Cysteine 27 carries N-palmitoyl cysteine lipidation. The S-diacylglycerol cysteine moiety is linked to residue cysteine 27. 2 disordered regions span residues 297–316 (AAAATDNGAPASSGTLAAAT) and 324–373 (VNAA…PDAH). The span at 332 to 363 (PSAQGTDAAAPAAPNDSAALPPLDAAGDPIAP) shows a compositional bias: low complexity.

Belongs to the LpoA family. As to quaternary structure, interacts with PBP1a.

Its subcellular location is the cell outer membrane. Regulator of peptidoglycan synthesis that is essential for the function of penicillin-binding protein 1A (PBP1a). The chain is Penicillin-binding protein activator LpoA from Edwardsiella piscicida.